The sequence spans 584 residues: 65 kDa membrane protein (584 aa).

A signal peptide spans 1-30 (MKFKSLITTTLALGVLASTGANFNNNEASA). 5 MAP repeats span residues 45-154 (GYSK…EDKK), 156-265 (DKAN…ENKA), 266-374 (KRNY…KADR), 375-474 (YVPY…TGTK), and 475-584 (AKAD…KKNK).

It is found in the cell membrane. Its function is as follows. Binds various plasma and ECM-proteins. The protein is 65 kDa membrane protein of Staphylococcus aureus (strain Newman).